The primary structure comprises 398 residues: Succinate--CoA ligase [ADP-forming] subunit beta (398 aa).

Residues 9 to 254 enclose the ATP-grasp domain; it reads KAVLREFGVP…ESEEDAKEIE (246 aa). ATP-binding positions include Lys46, 53–55, Glu109, Ser112, and Glu117; that span reads GRG. The Mg(2+) site is built by Asn209 and Asp223. Residues Asn274 and 331–333 each bind substrate; that span reads GIM.

This sequence belongs to the succinate/malate CoA ligase beta subunit family. As to quaternary structure, heterotetramer of two alpha and two beta subunits. It depends on Mg(2+) as a cofactor.

The enzyme catalyses succinate + ATP + CoA = succinyl-CoA + ADP + phosphate. The catalysed reaction is GTP + succinate + CoA = succinyl-CoA + GDP + phosphate. The protein operates within carbohydrate metabolism; tricarboxylic acid cycle; succinate from succinyl-CoA (ligase route): step 1/1. Its function is as follows. Succinyl-CoA synthetase functions in the citric acid cycle (TCA), coupling the hydrolysis of succinyl-CoA to the synthesis of either ATP or GTP and thus represents the only step of substrate-level phosphorylation in the TCA. The beta subunit provides nucleotide specificity of the enzyme and binds the substrate succinate, while the binding sites for coenzyme A and phosphate are found in the alpha subunit. The chain is Succinate--CoA ligase [ADP-forming] subunit beta from Rhodopseudomonas palustris (strain HaA2).